The primary structure comprises 266 residues: Putative carbamate hydrolase RutD (266 aa).

An AB hydrolase-1 domain is found at 14-115; sequence PVVVLISGLG…TVLISVNGWL (102 aa).

Belongs to the AB hydrolase superfamily. Hydrolase RutD family.

The enzyme catalyses carbamate + 2 H(+) = NH4(+) + CO2. Involved in pyrimidine catabolism. May facilitate the hydrolysis of carbamate, a reaction that can also occur spontaneously. In Shigella sonnei (strain Ss046), this protein is Putative carbamate hydrolase RutD.